Here is a 319-residue protein sequence, read N- to C-terminus: Protein StrN (319 aa).

It participates in antibiotic biosynthesis; streptomycin biosynthesis. In Streptomyces griseus, this protein is Protein StrN (strN).